The following is a 322-amino-acid chain: Homoserine kinase (322 aa).

107-117 (PLSSGMGGSAA) is a binding site for ATP.

It belongs to the GHMP kinase family. Homoserine kinase subfamily.

It localises to the cytoplasm. The enzyme catalyses L-homoserine + ATP = O-phospho-L-homoserine + ADP + H(+). The protein operates within amino-acid biosynthesis; L-threonine biosynthesis; L-threonine from L-aspartate: step 4/5. In terms of biological role, catalyzes the ATP-dependent phosphorylation of L-homoserine to L-homoserine phosphate. The protein is Homoserine kinase of Xylella fastidiosa (strain M23).